The following is a 505-amino-acid chain: AMP phosphorylase (505 aa).

AMP-binding positions include Gly170, 196–201, and Thr205; that span reads SRAITS. Asp258 (proton donor) is an active-site residue. Positions 266 and 290 each coordinate AMP.

Belongs to the thymidine/pyrimidine-nucleoside phosphorylase family. Type 2 subfamily.

The catalysed reaction is AMP + phosphate = alpha-D-ribose 1,5-bisphosphate + adenine. The enzyme catalyses CMP + phosphate = cytosine + alpha-D-ribose 1,5-bisphosphate. It carries out the reaction UMP + phosphate = alpha-D-ribose 1,5-bisphosphate + uracil. Catalyzes the conversion of AMP and phosphate to adenine and ribose 1,5-bisphosphate (R15P). Exhibits phosphorylase activity toward CMP and UMP in addition to AMP. Functions in an archaeal AMP degradation pathway, together with R15P isomerase and RubisCO. The polypeptide is AMP phosphorylase (Methanococcus maripaludis (strain C7 / ATCC BAA-1331)).